Here is a 243-residue protein sequence, read N- to C-terminus: Small ribosomal subunit protein uS3 (243 aa).

In terms of domain architecture, KH type-2 spans 39-110 (IRKFIHKKYG…QVRINVVEVE (72 aa)). The interval 217 to 243 (QQLPVGATPRRRAGRRPQQFEDRSNEG) is disordered. Residues 234–243 (QQFEDRSNEG) are compositionally biased toward basic and acidic residues.

This sequence belongs to the universal ribosomal protein uS3 family. In terms of assembly, part of the 30S ribosomal subunit. Forms a tight complex with proteins S10 and S14.

Functionally, binds the lower part of the 30S subunit head. Binds mRNA in the 70S ribosome, positioning it for translation. This chain is Small ribosomal subunit protein uS3, found in Synechococcus sp. (strain WH7803).